The primary structure comprises 387 residues: Methyltransferase phomM' (387 aa).

The interval 98–223 (PHRPKDLHIL…QSVADLFTTL (126 aa)) is methyltransferase domain.

The protein belongs to the class I-like SAM-binding methyltransferase superfamily. Erg6/SMT family.

The protein operates within mycotoxin biosynthesis. Methyltransferase; part of the gene cluster that mediates the biosynthesis of the phomopsins, a group of hexapeptide mycotoxins which infects lupins and causes lupinosis disease in livestock. Within the pathway, phomM' acts as an S-adenosylmethionine-dependent alpha-N-methyltransferase that catalyzes two successive N-methylation reactions, converting N-desmethyl-phomopsin A to phomopsin A and phomopsin A further to an N,N-dimethylated congener called phomopsin E. The pathway starts with the processing of the precursor phomA' by several endopeptidases including kexin proteases as well as the cluster-specific S41 family peptidase phomP1 and the oligopeptidase phomG' to produce 10 identical copies of the hexapeptide Tyr-Val-Ile-Pro-Ile-Asp. After being excised from the precursor peptide, the core peptides are cyclized and modified post-translationally by enzymes encoded within the gene cluster. The timing and order of proteolysis of the phomA' precursor and PTMs are still unknown. Two tyrosinase-like enzymes, phomQ1' and phomQ2, catalyze the chlorination and hydroxylation of Tyr, respectively. PhomYb, is proposed to be involved in the construction of the macrocyclic structure. The other 4 ustYa family proteins may be involved in PTMs that generate the unique structure of phomopsin A. PhomYa' is required for the hydroxylation of C-beta of Tyr. PhomYc', phomYd', and phomYe are responsible for the biosynthesis of 2,3-dehydroisoleucine (dIle), 2,3-dehydroaspartic acid (dAsp), and 3,4-dehydroproline (dPro), respectively. While dIle formation by phomYc' is indispensable for the installation of dAsp by phomYd', the order of the other PTMs have not been elucidated yet. Most of the biosynthetic enzymes likely have broad substrate specificity, and thus, there might be a metabolic grid from a precursor to phomopsin A. The enzyme(s) responsible for the biosynthesis of 3,4-dehydrovaline (dVal) have also not been identified yet. Finally, phomM' acts as an S-adenosylmethionine-dependent alpha-N-methyltransferase that catalyzes two successive N-methylation reactions, converting N-desmethyl-phomopsin A to phomopsin A and phomopsin A further to an N,N-dimethylated congener called phomopsin E. The chain is Methyltransferase phomM' from Diaporthe leptostromiformis (Lupinosis disease fungus).